The sequence spans 63 residues: Anionic peptide 10.1 (63 aa).

The first 20 residues, 1-20, serve as a signal peptide directing secretion; sequence MISRFCLLFLLVFVVSKIQA.

The protein belongs to the non-disulfide-bridged peptide (NDBP) superfamily. Long chain multifunctional peptide (group 2) family. As to expression, expressed by the venom gland.

Its subcellular location is the secreted. The protein is Anionic peptide 10.1 of Lychas mucronatus (Chinese swimming scorpion).